Consider the following 418-residue polypeptide: Serine hydroxymethyltransferase (418 aa).

(6S)-5,6,7,8-tetrahydrofolate is bound by residues leucine 120 and 124–126 (GHL). Lysine 229 is modified (N6-(pyridoxal phosphate)lysine).

Belongs to the SHMT family. Homodimer. It depends on pyridoxal 5'-phosphate as a cofactor.

The protein localises to the cytoplasm. The catalysed reaction is (6R)-5,10-methylene-5,6,7,8-tetrahydrofolate + glycine + H2O = (6S)-5,6,7,8-tetrahydrofolate + L-serine. It functions in the pathway one-carbon metabolism; tetrahydrofolate interconversion. The protein operates within amino-acid biosynthesis; glycine biosynthesis; glycine from L-serine: step 1/1. In terms of biological role, catalyzes the reversible interconversion of serine and glycine with tetrahydrofolate (THF) serving as the one-carbon carrier. This reaction serves as the major source of one-carbon groups required for the biosynthesis of purines, thymidylate, methionine, and other important biomolecules. Also exhibits THF-independent aldolase activity toward beta-hydroxyamino acids, producing glycine and aldehydes, via a retro-aldol mechanism. The polypeptide is Serine hydroxymethyltransferase (Myxococcus xanthus (strain DK1622)).